The chain runs to 482 residues: Mannose-1-phosphate guanylyltransferase 2 (482 aa).

The protein belongs to the mannose-6-phosphate isomerase type 2 family.

The enzyme catalyses alpha-D-mannose 1-phosphate + GTP + H(+) = GDP-alpha-D-mannose + diphosphate. It participates in nucleotide-sugar biosynthesis; GDP-alpha-D-mannose biosynthesis; GDP-alpha-D-mannose from alpha-D-mannose 1-phosphate (GTP route): step 1/1. Involved in GDP-mannose biosynthesis which serves as the activated sugar nucleotide precursor for mannose residues in cell surface polysaccharides. This enzyme participates in synthesis of the LPS O antigen. The polypeptide is Mannose-1-phosphate guanylyltransferase 2 (manC2) (Escherichia coli O157:H7).